We begin with the raw amino-acid sequence, 440 residues long: MTIQQKVPTVGFVSLGCPKASSDAERILTKLRAEGYEISPSYDNSDLVIVNTCGFIDAAVEESLDAIGEALNENGKVIVTGCLGAKGDIVQTTHPAVLAVTGPHAADEVMGIVHTHLPKPHDPYSDLVPPQGVRLTPDHFAYLKISEGCNHSCTFCIIPSLRGPLVSRPVGDVLAEAENLARAGVKEILVISQDTSAYGVDLKYRTAFWGGKPVKSRLKELCEALASLGIWVRLHYVYPYPSVDDVIPLMAEGKILPYLDVPFQHASPKILKAMKRPASAENTLERIAKWREICPEIVIRSTFITGFPGETEEDFDQLIQFLEDAKLDRVGAFAYSPVDGAKANELGELLPEDVREDRRRWLMQVQEDISADKLAAKIDTVIQVLVDEVDEEGTIARSKADAPEIDGLVYLDGHFDAQPGDFLQVKVIDADHHDLYAQVV.

One can recognise an MTTase N-terminal domain in the interval 8 to 118 (PTVGFVSLGC…VMGIVHTHLP (111 aa)). Cysteine 17, cysteine 53, cysteine 82, cysteine 149, cysteine 153, and cysteine 156 together coordinate [4Fe-4S] cluster. The region spanning 135–372 (LTPDHFAYLK…MQVQEDISAD (238 aa)) is the Radical SAM core domain. The region spanning 375–440 (AAKIDTVIQV…DHHDLYAQVV (66 aa)) is the TRAM domain.

This sequence belongs to the methylthiotransferase family. RimO subfamily. It depends on [4Fe-4S] cluster as a cofactor.

Its subcellular location is the cytoplasm. The catalysed reaction is L-aspartate(89)-[ribosomal protein uS12]-hydrogen + (sulfur carrier)-SH + AH2 + 2 S-adenosyl-L-methionine = 3-methylsulfanyl-L-aspartate(89)-[ribosomal protein uS12]-hydrogen + (sulfur carrier)-H + 5'-deoxyadenosine + L-methionine + A + S-adenosyl-L-homocysteine + 2 H(+). Catalyzes the methylthiolation of an aspartic acid residue of ribosomal protein uS12. This is Ribosomal protein uS12 methylthiotransferase RimO from Dechloromonas aromatica (strain RCB).